The chain runs to 116 residues: MALSPRESAAKRAQRVRTRLKSLANGRPRLSVFRSSKNIYAQVIDDERGVTLASASTLEAEGKGADKDAAAAVGKLVAERAIEKGVKDVVFDRGSYIFHGRVKALADAAREAGLNF.

Belongs to the universal ribosomal protein uL18 family. Part of the 50S ribosomal subunit; part of the 5S rRNA/L5/L18/L25 subcomplex. Contacts the 5S and 23S rRNAs.

Functionally, this is one of the proteins that bind and probably mediate the attachment of the 5S RNA into the large ribosomal subunit, where it forms part of the central protuberance. This Caulobacter vibrioides (strain ATCC 19089 / CIP 103742 / CB 15) (Caulobacter crescentus) protein is Large ribosomal subunit protein uL18.